Consider the following 403-residue polypeptide: S-adenosylmethionine synthase (403 aa).

Residue His-15 participates in ATP binding. Asp-17 contributes to the Mg(2+) binding site. A K(+)-binding site is contributed by Glu-43. 2 residues coordinate L-methionine: Glu-56 and Gln-99. The segment at 99–109 (QSPDINQGVDR) is flexible loop. ATP contacts are provided by residues 166–168 (DAK), 232–233 (KF), Asp-241, 247–248 (RK), Ala-264, and Lys-268. Asp-241 serves as a coordination point for L-methionine. An L-methionine-binding site is contributed by Lys-272.

It belongs to the AdoMet synthase family. Homotetramer; dimer of dimers. Mg(2+) is required as a cofactor. K(+) serves as cofactor.

Its subcellular location is the cytoplasm. It carries out the reaction L-methionine + ATP + H2O = S-adenosyl-L-methionine + phosphate + diphosphate. The protein operates within amino-acid biosynthesis; S-adenosyl-L-methionine biosynthesis; S-adenosyl-L-methionine from L-methionine: step 1/1. Functionally, catalyzes the formation of S-adenosylmethionine (AdoMet) from methionine and ATP. The overall synthetic reaction is composed of two sequential steps, AdoMet formation and the subsequent tripolyphosphate hydrolysis which occurs prior to release of AdoMet from the enzyme. The protein is S-adenosylmethionine synthase of Xylella fastidiosa (strain Temecula1 / ATCC 700964).